The primary structure comprises 293 residues: NAD kinase (293 aa).

Asp-72 serves as the catalytic Proton acceptor. NAD(+) is bound by residues 72-73 (DG), 146-147 (ND), Arg-157, Arg-174, Asp-176, 187-192 (TAYALS), and Gln-247.

The protein belongs to the NAD kinase family. Requires a divalent metal cation as cofactor.

The protein resides in the cytoplasm. The catalysed reaction is NAD(+) + ATP = ADP + NADP(+) + H(+). Its function is as follows. Involved in the regulation of the intracellular balance of NAD and NADP, and is a key enzyme in the biosynthesis of NADP. Catalyzes specifically the phosphorylation on 2'-hydroxyl of the adenosine moiety of NAD to yield NADP. The sequence is that of NAD kinase from Chromohalobacter salexigens (strain ATCC BAA-138 / DSM 3043 / CIP 106854 / NCIMB 13768 / 1H11).